The following is a 694-amino-acid chain: NADPH--cytochrome P450 reductase (694 aa).

The Lumenal segment spans residues 1 to 8 (MAQLDTLD). A helical membrane pass occupies residues 9–31 (LVVLAVLLVGSVAYFTKGTYWAV). Over 32–694 (AKDPYASTGP…RGRYQEDVWS (663 aa)) the chain is Cytoplasmic. The 155-residue stretch at 66–220 (CVIFYGSQTG…DFLAWKEPMW (155 aa)) folds into the Flavodoxin-like domain. FMN contacts are provided by residues 72–77 (SQTGTA), 123–126 (ATYG), 168–177 (LGNNTYEHYN), and Asp-203. One can recognise an FAD-binding FR-type domain in the interval 276–537 (HNPFIAPIAE…HVRHSNFKLP (262 aa)). Arg-295 is an NADP(+) binding site. FAD is bound by residues 450–453 (RYYS), 468–470 (TAV), and 485–488 (GVTT). Residues Thr-551, 613-614 (SR), 619-623 (KVYVQ), and Glu-655 contribute to the NADP(+) site. Residue Trp-693 coordinates FAD.

This sequence belongs to the NADPH--cytochrome P450 reductase family. The protein in the N-terminal section; belongs to the flavodoxin family. In the C-terminal section; belongs to the flavoprotein pyridine nucleotide cytochrome reductase family. FAD is required as a cofactor. Requires FMN as cofactor.

The protein localises to the endoplasmic reticulum membrane. It is found in the mitochondrion outer membrane. The protein resides in the cell membrane. The enzyme catalyses 2 oxidized [cytochrome P450] + NADPH = 2 reduced [cytochrome P450] + NADP(+) + H(+). In terms of biological role, this enzyme is required for electron transfer from NADP to cytochrome P450 in microsomes. It can also provide electron transfer to heme oxygenase and cytochrome B5. Involved in ergosterol biosynthesis. The sequence is that of NADPH--cytochrome P450 reductase from Aspergillus niger.